Reading from the N-terminus, the 88-residue chain is MASKERVGVVIRNPQEKTVIVAVNNRVRHNKYSKIIIRTKKYQVHDHSHICKLGDEVKISEVKPISKTKRWIISEVLSSTVNPEKFGD.

This sequence belongs to the universal ribosomal protein uS17 family. As to quaternary structure, part of the 30S ribosomal subunit.

It localises to the plastid. The protein localises to the cyanelle. In terms of biological role, one of the primary rRNA binding proteins, it binds specifically to the 5'-end of 16S ribosomal RNA. This chain is Small ribosomal subunit protein uS17c (rps17), found in Cyanophora paradoxa.